Consider the following 165-residue polypeptide: NADH-quinone oxidoreductase subunit I (165 aa).

4Fe-4S ferredoxin-type domains follow at residues 57-86 and 96-125; these read RRYENGEERCIACKLCEAVCPALAITIESD and SRYDIDLTKCIFCGFCEESCPVDSIVETHI. The [4Fe-4S] cluster site is built by Cys66, Cys69, Cys72, Cys76, Cys105, Cys108, Cys111, and Cys115.

Belongs to the complex I 23 kDa subunit family. In terms of assembly, NDH-1 is composed of 14 different subunits. Subunits NuoA, H, J, K, L, M, N constitute the membrane sector of the complex. It depends on [4Fe-4S] cluster as a cofactor.

Its subcellular location is the cell inner membrane. It catalyses the reaction a quinone + NADH + 5 H(+)(in) = a quinol + NAD(+) + 4 H(+)(out). In terms of biological role, NDH-1 shuttles electrons from NADH, via FMN and iron-sulfur (Fe-S) centers, to quinones in the respiratory chain. The immediate electron acceptor for the enzyme in this species is believed to be ubiquinone. Couples the redox reaction to proton translocation (for every two electrons transferred, four hydrogen ions are translocated across the cytoplasmic membrane), and thus conserves the redox energy in a proton gradient. This chain is NADH-quinone oxidoreductase subunit I, found in Polaromonas naphthalenivorans (strain CJ2).